The sequence spans 340 residues: MSTDKITFLLNWQPTPYHIPIFLAQTKGYFKEQGLDIAILEPTNPSDVTELIGSGKVDMGLKAMIHTLAAKARGFPVTSVASLLDEPFTGVLYLKGSGITEDFQSLKGKKIGYVGEFGKIQIDELTKHYGMKPEDYTAVRCGMNVAKYIIEGKIDAGIGIECMQQVELEEYLAKQGRPASDAKMLRIDKLACLGCCCFCTVLYICNDEFLKKNPEKVRKFLKAIKKATDYVLADPVKAWKEYIDFKPQLNNDLSYKQYQRCYAYFSSSLYNVHRDWKKVTGYGKRLAILPPDYVSNYTNEYLSWPEPEEVSDPLEAQRLMAIHQEKCRQEGTFKRLALPA.

Residue K62 is modified to N6-(pyridoxal phosphate)lysine. The active site involves H66. 115-118 (GEFG) is a pyridoxal 5'-phosphate binding site. The CCCFC; essential for catalytic activity, may be the site of iron coordination signature appears at 195-199 (CCCFC).

This sequence belongs to the NMT1/THI5 family. Homodimer. Fe cation serves as cofactor.

It catalyses the reaction N(6)-(pyridoxal phosphate)-L-lysyl-[4-amino-5-hydroxymethyl-2-methylpyrimidine phosphate synthase] + L-histidyl-[4-amino-5-hydroxymethyl-2-methylpyrimidine phosphate synthase] + 2 Fe(3+) + 4 H2O = L-lysyl-[4-amino-5-hydroxymethyl-2-methylpyrimidine phosphate synthase] + (2S)-2-amino-5-hydroxy-4-oxopentanoyl-[4-amino-5-hydroxymethyl-2-methylpyrimidine phosphate synthase] + 4-amino-2-methyl-5-(phosphooxymethyl)pyrimidine + 3-oxopropanoate + 2 Fe(2+) + 2 H(+). Its pathway is cofactor biosynthesis; thiamine diphosphate biosynthesis. Responsible for the formation of the pyrimidine heterocycle in the thiamine biosynthesis pathway. Catalyzes the formation of hydroxymethylpyrimidine phosphate (HMP-P) from histidine and pyridoxal phosphate (PLP). The protein uses PLP and the active site histidine to form HMP-P, generating an inactive enzyme. The enzyme can only undergo a single turnover, which suggests it is a suicide enzyme. The polypeptide is 4-amino-5-hydroxymethyl-2-methylpyrimidine phosphate synthase THI13 (Saccharomyces cerevisiae (strain ATCC 204508 / S288c) (Baker's yeast)).